Consider the following 447-residue polypeptide: Cobyrinate a,c-diamide synthase (447 aa).

In terms of domain architecture, GATase cobBQ-type spans 247 to 435; it reads RIGVAIDEAF…IHIHAASCPQ (189 aa). The active-site Nucleophile is Cys-329.

Belongs to the CobB/CbiA family. Mg(2+) serves as cofactor.

The catalysed reaction is cob(II)yrinate + 2 L-glutamine + 2 ATP + 2 H2O = cob(II)yrinate a,c diamide + 2 L-glutamate + 2 ADP + 2 phosphate + 2 H(+). It carries out the reaction Ni-sirohydrochlorin + 2 L-glutamine + 2 ATP + 2 H2O = Ni-sirohydrochlorin a,c-diamide + 2 L-glutamate + 2 ADP + 2 phosphate + 2 H(+). Its pathway is cofactor biosynthesis; adenosylcobalamin biosynthesis; cob(II)yrinate a,c-diamide from sirohydrochlorin (anaerobic route): step 10/10. Functionally, catalyzes the ATP-dependent amidation of the two carboxylate groups at positions a and c of cobyrinate, using either L-glutamine or ammonia as the nitrogen source. Involved in the biosynthesis of the unique nickel-containing tetrapyrrole coenzyme F430, the prosthetic group of methyl-coenzyme M reductase (MCR), which plays a key role in methanogenesis and anaerobic methane oxidation. Catalyzes the ATP-dependent amidation of the two carboxylate groups at positions a and c of Ni-sirohydrochlorin, using L-glutamine or ammonia as the nitrogen source. This is Cobyrinate a,c-diamide synthase from Methanothermobacter thermautotrophicus (strain ATCC 29096 / DSM 1053 / JCM 10044 / NBRC 100330 / Delta H) (Methanobacterium thermoautotrophicum).